The primary structure comprises 554 residues: Dihydroxy-acid dehydratase (554 aa).

Aspartate 78 contacts Mg(2+). Cysteine 119 is a [2Fe-2S] cluster binding site. Mg(2+) contacts are provided by aspartate 120 and lysine 121. Lysine 121 carries the post-translational modification N6-carboxylysine. Residue cysteine 191 participates in [2Fe-2S] cluster binding. Residue glutamate 442 coordinates Mg(2+). The active-site Proton acceptor is serine 468.

Belongs to the IlvD/Edd family. Homodimer. [2Fe-2S] cluster serves as cofactor. Requires Mg(2+) as cofactor.

It carries out the reaction (2R)-2,3-dihydroxy-3-methylbutanoate = 3-methyl-2-oxobutanoate + H2O. The enzyme catalyses (2R,3R)-2,3-dihydroxy-3-methylpentanoate = (S)-3-methyl-2-oxopentanoate + H2O. Its pathway is amino-acid biosynthesis; L-isoleucine biosynthesis; L-isoleucine from 2-oxobutanoate: step 3/4. It participates in amino-acid biosynthesis; L-valine biosynthesis; L-valine from pyruvate: step 3/4. Functions in the biosynthesis of branched-chain amino acids. Catalyzes the dehydration of (2R,3R)-2,3-dihydroxy-3-methylpentanoate (2,3-dihydroxy-3-methylvalerate) into 2-oxo-3-methylpentanoate (2-oxo-3-methylvalerate) and of (2R)-2,3-dihydroxy-3-methylbutanoate (2,3-dihydroxyisovalerate) into 2-oxo-3-methylbutanoate (2-oxoisovalerate), the penultimate precursor to L-isoleucine and L-valine, respectively. The polypeptide is Dihydroxy-acid dehydratase (Thermotoga petrophila (strain ATCC BAA-488 / DSM 13995 / JCM 10881 / RKU-1)).